The chain runs to 78 residues: Mandibular organ-inhibiting hormone 1 (78 aa).

3 cysteine pairs are disulfide-bonded: Cys-7–Cys-44, Cys-24–Cys-40, and Cys-27–Cys-53.

It belongs to the arthropod CHH/MIH/GIH/VIH hormone family. Produced by the medulla terminalis X-organ in the eyestalks and transported to the sinus gland where it is stored and released.

The protein localises to the secreted. In terms of biological role, represses the synthesis of methyl farnesoate, the precursor of insect juvenile hormone III in the mandibular organ. The protein is Mandibular organ-inhibiting hormone 1 of Cancer pagurus (Rock crab).